We begin with the raw amino-acid sequence, 255 residues long: Large ribosomal subunit protein uL4 (255 aa).

The protein belongs to the universal ribosomal protein uL4 family. In terms of assembly, part of the 50S ribosomal subunit.

One of the primary rRNA binding proteins, this protein initially binds near the 5'-end of the 23S rRNA. It is important during the early stages of 50S assembly. It makes multiple contacts with different domains of the 23S rRNA in the assembled 50S subunit and ribosome. Its function is as follows. Forms part of the polypeptide exit tunnel. The sequence is that of Large ribosomal subunit protein uL4 from Thermococcus kodakarensis (strain ATCC BAA-918 / JCM 12380 / KOD1) (Pyrococcus kodakaraensis (strain KOD1)).